The chain runs to 386 residues: WD repeat-containing protein 89 (386 aa).

WD repeat units follow at residues 21 to 65 (KEPT…LLRE), 68 to 107 (GSPGLLSGVSFANSCDSVYSASTDGTVKCWDARGASEKPV), 112 to 156 (GYPS…QDLS), 167 to 207 (THSD…EEDA), 213 to 253 (NSVS…TDEP), and 318 to 357 (GHAATVRSFCWNVSEDSLLTGGEDAQLLLWKPGAMEKTFT).

The protein is WD repeat-containing protein 89 (Wdr89) of Mus musculus (Mouse).